The following is a 349-amino-acid chain: Magnesium-protoporphyrin IX monomethyl ester [oxidative] cyclase (349 aa).

The protein belongs to the AcsF family. Requires Fe cation as cofactor.

It localises to the plastid. Its subcellular location is the chloroplast. It carries out the reaction Mg-protoporphyrin IX 13-monomethyl ester + 3 NADPH + 3 O2 + 2 H(+) = 3,8-divinyl protochlorophyllide a + 3 NADP(+) + 5 H2O. Its pathway is porphyrin-containing compound metabolism; chlorophyll biosynthesis (light-independent). Its function is as follows. Catalyzes the formation of the isocyclic ring in chlorophyll biosynthesis. Mediates the cyclase reaction, which results in the formation of divinylprotochlorophyllide (Pchlide) characteristic of all chlorophylls from magnesium-protoporphyrin IX 13-monomethyl ester (MgPMME). This chain is Magnesium-protoporphyrin IX monomethyl ester [oxidative] cyclase, found in Pyropia yezoensis (Susabi-nori).